We begin with the raw amino-acid sequence, 217 residues long: Urease accessory protein UreG (217 aa).

The segment covering 1–18 (MNAPHHPAHSTVRTKKLP) has biased composition (basic residues). The tract at residues 1–24 (MNAPHHPAHSTVRTKKLPPLRVGV) is disordered. Position 26 to 33 (26 to 33 (GPVGSGKT)) interacts with GTP.

This sequence belongs to the SIMIBI class G3E GTPase family. UreG subfamily. In terms of assembly, homodimer. UreD, UreF and UreG form a complex that acts as a GTP-hydrolysis-dependent molecular chaperone, activating the urease apoprotein by helping to assemble the nickel containing metallocenter of UreC. The UreE protein probably delivers the nickel.

It localises to the cytoplasm. Functionally, facilitates the functional incorporation of the urease nickel metallocenter. This process requires GTP hydrolysis, probably effectuated by UreG. This is Urease accessory protein UreG from Paraburkholderia xenovorans (strain LB400).